Reading from the N-terminus, the 332-residue chain is Tetraacyldisaccharide 4'-kinase (332 aa).

52-59 lines the ATP pocket; that stretch reads TLGGAGKT.

It belongs to the LpxK family.

It catalyses the reaction a lipid A disaccharide + ATP = a lipid IVA + ADP + H(+). Its pathway is glycolipid biosynthesis; lipid IV(A) biosynthesis; lipid IV(A) from (3R)-3-hydroxytetradecanoyl-[acyl-carrier-protein] and UDP-N-acetyl-alpha-D-glucosamine: step 6/6. Functionally, transfers the gamma-phosphate of ATP to the 4'-position of a tetraacyldisaccharide 1-phosphate intermediate (termed DS-1-P) to form tetraacyldisaccharide 1,4'-bis-phosphate (lipid IVA). In Methylobacterium sp. (strain 4-46), this protein is Tetraacyldisaccharide 4'-kinase.